The sequence spans 130 residues: ATP synthase epsilon chain (130 aa).

The protein belongs to the ATPase epsilon chain family. In terms of assembly, F-type ATPases have 2 components, CF(1) - the catalytic core - and CF(0) - the membrane proton channel. CF(1) has five subunits: alpha(3), beta(3), gamma(1), delta(1), epsilon(1). CF(0) has three main subunits: a, b and c.

It is found in the cell membrane. Functionally, produces ATP from ADP in the presence of a proton gradient across the membrane. In Nocardia farcinica (strain IFM 10152), this protein is ATP synthase epsilon chain.